Reading from the N-terminus, the 187-residue chain is Probable chorismate pyruvate-lyase (187 aa).

Arg80, Leu117, and Glu176 together coordinate substrate.

It belongs to the UbiC family.

Its subcellular location is the cytoplasm. It carries out the reaction chorismate = 4-hydroxybenzoate + pyruvate. The protein operates within cofactor biosynthesis; ubiquinone biosynthesis. In terms of biological role, removes the pyruvyl group from chorismate, with concomitant aromatization of the ring, to provide 4-hydroxybenzoate (4HB) for the ubiquinone pathway. The chain is Probable chorismate pyruvate-lyase from Halorhodospira halophila (strain DSM 244 / SL1) (Ectothiorhodospira halophila (strain DSM 244 / SL1)).